A 580-amino-acid polypeptide reads, in one-letter code: Thymidine kinase (580 aa).

2 disordered regions span residues M1–K60 and V133–G157. Pro residues predominate over residues P137 to T149. G260 to S267 contacts ATP. E287 functions as the Proton acceptor in the catalytic mechanism. A substrate-binding site is contributed by Q325. An ATP-binding site is contributed by R415. R421 is a binding site for substrate.

Belongs to the herpesviridae thymidine kinase family. Homodimer.

The enzyme catalyses thymidine + ATP = dTMP + ADP + H(+). Functionally, catalyzes the transfer of the gamma-phospho group of ATP to thymidine to generate dTMP in the salvage pathway of pyrimidine synthesis. The dTMP serves as a substrate for DNA polymerase during viral DNA replication. Allows the virus to be reactivated and to grow in non-proliferative cells lacking a high concentration of phosphorylated nucleic acid precursors. This Human herpesvirus 8 type P (isolate GK18) (HHV-8) protein is Thymidine kinase.